Reading from the N-terminus, the 477-residue chain is 23S rRNA (uracil(1939)-C(5))-methyltransferase RlmD (477 aa).

The TRAM domain maps to 7–66; that stretch reads KTENFPPDWLLVESLDLEAQGVAHRADGKVVFIKGALPFELVSANVHRKKNNWEQGVVTA. [4Fe-4S] cluster contacts are provided by Cys-79, Cys-89, Cys-92, and Cys-171. Positions 280, 309, 314, 330, 365, and 386 each coordinate S-adenosyl-L-methionine. The active-site Nucleophile is Cys-432.

Belongs to the class I-like SAM-binding methyltransferase superfamily. RNA M5U methyltransferase family. RlmD subfamily.

The enzyme catalyses uridine(1939) in 23S rRNA + S-adenosyl-L-methionine = 5-methyluridine(1939) in 23S rRNA + S-adenosyl-L-homocysteine + H(+). Its function is as follows. Catalyzes the formation of 5-methyl-uridine at position 1939 (m5U1939) in 23S rRNA. The sequence is that of 23S rRNA (uracil(1939)-C(5))-methyltransferase RlmD from Albidiferax ferrireducens (strain ATCC BAA-621 / DSM 15236 / T118) (Rhodoferax ferrireducens).